A 984-amino-acid polypeptide reads, in one-letter code: Putative formate dehydrogenase SAR2393 (984 aa).

Residues 3–79 (EHLVVTLDGK…PMTVNTVNND (77 aa)) enclose the 2Fe-2S ferredoxin-type domain. [2Fe-2S] cluster-binding residues include Cys-37, Cys-48, Cys-51, and Cys-63. A 4Fe-4S His(Cys)3-ligated-type domain is found at 79–119 (DVKDAQKEALDRILEKHMLYCTVCDYNNGDCEIHNTMDAWG). 16 residues coordinate [4Fe-4S] cluster: His-95, Cys-99, Cys-102, Cys-109, Cys-147, Cys-150, Cys-153, Cys-157, Cys-190, Cys-193, Cys-196, Cys-200, Cys-264, Cys-267, Cys-271, and Cys-299. 2 4Fe-4S ferredoxin-type domains span residues 138–165 (PFYRYDPNQCILCGRCVEACQDIELNET) and 181–211 (NDVPINESSCVSCGQCATVCPCNAMMEVNME). The segment at 252 to 984 (MRKERIKKTK…YVFPGNQVDK (733 aa)) is formate dehydrogenase. Residues 257–313 (IKKTKTVCTYCGVGCSFEVWTKDREILKVQPSHDSPANKIATCVKGKFSWGHINSDQ) form the 4Fe-4S Mo/W bis-MGD-type domain.

It in the C-terminal section; belongs to the prokaryotic molybdopterin-containing oxidoreductase family. The cofactor is [2Fe-2S] cluster. It depends on [4Fe-4S] cluster as a cofactor. Mo-bis(molybdopterin guanine dinucleotide) serves as cofactor.

The enzyme catalyses formate + NAD(+) = CO2 + NADH. This chain is Putative formate dehydrogenase SAR2393, found in Staphylococcus aureus (strain MRSA252).